The chain runs to 407 residues: tRNA(Ile2) 2-agmatinylcytidine synthetase TiaS (407 aa).

The protein belongs to the TiaS family.

It localises to the cytoplasm. The enzyme catalyses cytidine(34) in tRNA(Ile2) + agmatine + ATP + H2O = 2-agmatinylcytidine(34) in tRNA(Ile2) + AMP + 2 phosphate + 2 H(+). Its function is as follows. ATP-dependent agmatine transferase that catalyzes the formation of 2-agmatinylcytidine (agm2C) at the wobble position (C34) of tRNA(Ile2), converting the codon specificity from AUG to AUA. This chain is tRNA(Ile2) 2-agmatinylcytidine synthetase TiaS, found in Caldivirga maquilingensis (strain ATCC 700844 / DSM 13496 / JCM 10307 / IC-167).